Here is a 143-residue protein sequence, read N- to C-terminus: Hemoglobin cathodic subunit alpha (143 aa).

S2 is subject to N-acetylserine. Residues 2–143 enclose the Globin domain; sequence SLTAKDKTLV…VSAALADKYR (142 aa). H59 is a binding site for O2. Position 89 (H89) interacts with heme b.

It belongs to the globin family. In terms of assembly, heterotetramer of two alpha chains and two beta chains. As to expression, red blood cells.

Involved in oxygen transport from the gills to the various peripheral tissues. This Conger conger (Conger eel) protein is Hemoglobin cathodic subunit alpha.